The sequence spans 417 residues: Maltodextrin-binding protein MdxE (417 aa).

An N-terminal signal peptide occupies residues 1-22 (MVLLKKGFAILAASFLAIGLAA). Residue cysteine 23 is the site of N-palmitoyl cysteine attachment. Residue cysteine 23 is the site of S-diacylglycerol cysteine attachment.

It belongs to the bacterial solute-binding protein 1 family. The complex is composed of two ATP-binding proteins (MsmX), two transmembrane proteins (MdxF and MdxG) and a solute-binding protein (MdxE).

It is found in the cell membrane. With respect to regulation, inhibited by glucose and lactose. In terms of biological role, part of the ABC transporter complex involved in maltodextrin import. Binds maltodextrin. Can also bind maltose with low affinity, but is not involved in its uptake. The protein is Maltodextrin-binding protein MdxE (mdxE) of Bacillus subtilis (strain 168).